We begin with the raw amino-acid sequence, 89 residues long: Large ribosomal subunit protein bL27 (89 aa).

A disordered region spans residues Met-1–Leu-21.

This sequence belongs to the bacterial ribosomal protein bL27 family.

The chain is Large ribosomal subunit protein bL27 from Rhizobium leguminosarum bv. trifolii (strain WSM2304).